The chain runs to 551 residues: Harmonin (551 aa).

Residues 1-86 (MDRKVAREFR…LTPRRSRKLK (86 aa)) form an N-terminal domain region. PDZ domains follow at residues 87-169 (EVRL…HIGL) and 211-293 (KVFI…AGAG). The segment at 194 to 532 (GGRSSLGSPG…QKAWNQGDWI (339 aa)) is mediates interaction with MYO7B. Ser-219 is modified (phosphoserine). The stretch at 318–377 (LMQKRLAMESNKILQEQQEMERQRKKEIAQKAAEENERYRKEMEQIVEEEEKFRKQWEED) forms a coiled coil. Residues 401-425 (KPKYDLGVDPEFDPADDLDGGTNKR) are disordered. Positions 408–419 (VDPEFDPADDLD) are enriched in acidic residues. The 85-residue stretch at 452–536 (DVRLLRVKKE…NQGDWIDLVV (85 aa)) folds into the PDZ 3 domain.

In terms of assembly, part of the IMAC/intermicrovillar adhesion complex/intermicrovillar tip-link complex composed of ANKS4B, MYO7B, USH1C, CDHR2 and CDHR5. Part of a complex composed of USH1C, USH1G and MYO7A. Interacts with F-actin. Interacts with USH2A. Interacts with SLC4A7. Interacts (via PDZ1 domain) with the C-terminus of USHBP1. Interacts (via N-terminus and PDZ 2 domain) with CDH23. Interacts with USH1G. Interacts with MYO7B. Interacts with CDHR2 and CDHR5; may mediate their interaction with MYO7B at the microvilli tip. Interacts (via PDZ 1 domain) with ANKS4B. Interacts (via PDZ 1 domain) with DOCK4.

It is found in the cytoplasm. The protein localises to the cytosol. Its subcellular location is the cytoskeleton. It localises to the cell projection. The protein resides in the microvillus. Its function is as follows. Anchoring/scaffolding protein that is a part of the functional network formed by USH1C, USH1G, CDH23 and MYO7A that mediates mechanotransduction in cochlear hair cells. Required for normal development and maintenance of cochlear hair cell bundles. As part of the intermicrovillar adhesion complex/IMAC plays a role in brush border differentiation, controlling microvilli organization and length. Probably plays a central regulatory role in the assembly of the complex, recruiting CDHR2, CDHR5 and MYO7B to the microvilli tips. The protein is Harmonin (USH1C) of Bos taurus (Bovine).